Here is a 262-residue protein sequence, read N- to C-terminus: Acyl-[acyl-carrier-protein]--UDP-N-acetylglucosamine O-acyltransferase (262 aa).

The protein belongs to the transferase hexapeptide repeat family. LpxA subfamily. As to quaternary structure, homotrimer.

It is found in the cytoplasm. It catalyses the reaction a (3R)-hydroxyacyl-[ACP] + UDP-N-acetyl-alpha-D-glucosamine = a UDP-3-O-[(3R)-3-hydroxyacyl]-N-acetyl-alpha-D-glucosamine + holo-[ACP]. It functions in the pathway glycolipid biosynthesis; lipid IV(A) biosynthesis; lipid IV(A) from (3R)-3-hydroxytetradecanoyl-[acyl-carrier-protein] and UDP-N-acetyl-alpha-D-glucosamine: step 1/6. Involved in the biosynthesis of lipid A, a phosphorylated glycolipid that anchors the lipopolysaccharide to the outer membrane of the cell. This chain is Acyl-[acyl-carrier-protein]--UDP-N-acetylglucosamine O-acyltransferase, found in Yersinia enterocolitica serotype O:8 / biotype 1B (strain NCTC 13174 / 8081).